Consider the following 447-residue polypeptide: Lipid II isoglutaminyl synthase (glutamine-hydrolyzing) subunit MurT (447 aa).

Residues Cys-205, Cys-208, Cys-227, and Cys-230 each contribute to the Zn(2+) site. Asp-355 is an active-site residue.

This sequence belongs to the MurCDEF family. MurT subfamily. In terms of assembly, forms a heterodimer with GatD.

The enzyme catalyses beta-D-GlcNAc-(1-&gt;4)-Mur2Ac(oyl-L-Ala-gamma-D-Glu-L-Lys-D-Ala-D-Ala)-di-trans,octa-cis-undecaprenyl diphosphate + L-glutamine + ATP + H2O = beta-D-GlcNAc-(1-&gt;4)-Mur2Ac(oyl-L-Ala-D-isoglutaminyl-L-Lys-D-Ala-D-Ala)-di-trans,octa-cis-undecaprenyl diphosphate + L-glutamate + ADP + phosphate + H(+). It catalyses the reaction beta-D-GlcNAc-(1-&gt;4)-Mur2Ac(oyl-L-Ala-gamma-D-Glu-L-Lys-D-Ala-D-Ala)-di-trans,octa-cis-undecaprenyl diphosphate + ATP = beta-D-GlcNAc-(1-&gt;4)-Mur2Ac(oyl-L-Ala-gamma-D-O-P-Glu-L-Lys-D-Ala-D-Ala)-di-trans,octa-cis-undecaprenyl diphosphate + ADP. The catalysed reaction is beta-D-GlcNAc-(1-&gt;4)-Mur2Ac(oyl-L-Ala-gamma-D-O-P-Glu-L-Lys-D-Ala-D-Ala)-di-trans,octa-cis-undecaprenyl diphosphate + NH4(+) = beta-D-GlcNAc-(1-&gt;4)-Mur2Ac(oyl-L-Ala-D-isoglutaminyl-L-Lys-D-Ala-D-Ala)-di-trans,octa-cis-undecaprenyl diphosphate + phosphate + H(+). It participates in cell wall biogenesis; peptidoglycan biosynthesis. Its function is as follows. The lipid II isoglutaminyl synthase complex catalyzes the formation of alpha-D-isoglutamine in the cell wall lipid II stem peptide. The MurT subunit catalyzes the ATP-dependent amidation of D-glutamate residue of lipid II, converting it to an isoglutamine residue. This is Lipid II isoglutaminyl synthase (glutamine-hydrolyzing) subunit MurT from Streptococcus pneumoniae (strain ATCC BAA-255 / R6).